Reading from the N-terminus, the 176-residue chain is Sec-independent protein translocase protein TatB (176 aa).

Residues 1–21 form a helical membrane-spanning segment; that stretch reads MLDLGLSKMALIGVVALVVLG. The interval 155 to 176 is disordered; sequence QSGAARVARHQPASLRRPTRFL.

It belongs to the TatB family. The Tat system comprises two distinct complexes: a TatABC complex, containing multiple copies of TatA, TatB and TatC subunits, and a separate TatA complex, containing only TatA subunits. Substrates initially bind to the TatABC complex, which probably triggers association of the separate TatA complex to form the active translocon.

It localises to the cell inner membrane. Part of the twin-arginine translocation (Tat) system that transports large folded proteins containing a characteristic twin-arginine motif in their signal peptide across membranes. Together with TatC, TatB is part of a receptor directly interacting with Tat signal peptides. TatB may form an oligomeric binding site that transiently accommodates folded Tat precursor proteins before their translocation. This chain is Sec-independent protein translocase protein TatB, found in Burkholderia ambifaria (strain ATCC BAA-244 / DSM 16087 / CCUG 44356 / LMG 19182 / AMMD) (Burkholderia cepacia (strain AMMD)).